Here is a 412-residue protein sequence, read N- to C-terminus: Protein translocase subunit SecY (412 aa).

Helical transmembrane passes span 17 to 37 (IFLT…PVPG), 58 to 78 (IFSG…VPYI), 117 to 137 (ALGW…PYVF), 143 to 163 (FVVQ…WFSE), 170 to 190 (IGNG…PKLI), 251 to 271 (VMPI…GQVI), 293 to 313 (YLIF…SLII), 350 to 370 (TFLG…IENI), and 372 to 392 (SIST…GVAI).

This sequence belongs to the SecY/SEC61-alpha family. As to quaternary structure, component of the plastid Sec protein translocase complex, which is composed of at least SecY and SecE.

It localises to the plastid. It is found in the chloroplast thylakoid membrane. Functionally, the central subunit of the protein translocation channel SecYE. Consists of two halves formed by TMs 1-5 and 6-10. These two domains form a lateral gate at the front which open onto the bilayer between TMs 2 and 7, and are clamped together by SecE at the back. The channel is closed by both a pore ring composed of hydrophobic SecY resides and a short helix (helix 2A) on the extracellular side of the membrane which forms a plug. In Pyrenomonas salina, this protein is Protein translocase subunit SecY.